A 152-amino-acid chain; its full sequence is Large ribosomal subunit protein bL9 (152 aa).

The protein belongs to the bacterial ribosomal protein bL9 family.

Binds to the 23S rRNA. The polypeptide is Large ribosomal subunit protein bL9 (Mycoplasmopsis synoviae (strain 53) (Mycoplasma synoviae)).